The sequence spans 1828 residues: InaD-like protein (1828 aa).

Positions 5–65 (PAPDKLQVLQ…SIKQLKGQLS (61 aa)) constitute an L27 domain. 3 consecutive PDZ domains span residues 134-221 (YIDI…AREP), 248-328 (DVEL…ARDP), and 365-453 (GVEL…VRRK). 2 positions are modified to phosphoserine: Ser-459 and Ser-522. Positions 553-639 (DAELQKYSKL…PFTLVCCRRL (87 aa)) constitute a PDZ 4 domain. Phosphoserine is present on Ser-645. 2 consecutive PDZ domains span residues 686-758 (IVEL…EVLK) and 1070-1162 (IVEI…QSLS). The segment at 1168–1220 (IPSVHNKANKIANNQDQNTEEKKEKRQGTPPPPMKLPPPYKAPSDDSDENEEE) is disordered. Pro residues predominate over residues 1196–1208 (TPPPPMKLPPPYK). Position 1211 is a phosphoserine (Ser-1211). In terms of domain architecture, PDZ 7 spans 1241–1324 (IIELEKDKNG…KVKLVFIRNE (84 aa)). The disordered stretch occupies residues 1333-1362 (APFPVPSSSPSSLEDQSGTEPVSSEEDGSL). Residues 1345 to 1354 (LEDQSGTEPV) are compositionally biased toward polar residues. PDZ domains are found at residues 1464 to 1547 (IIEI…YRDE) and 1560 to 1642 (PVDL…GRLR). Residue Thr-1535 is modified to Phosphothreonine. Positions 1645–1668 (SWTSSRKTSQNSQGSQHSTHSSFH) are enriched in polar residues. The disordered stretch occupies residues 1645–1669 (SWTSSRKTSQNSQGSQHSTHSSFHP). The 87-residue stretch at 1703 to 1789 (TVEIIRELSD…RIILQVVADT (87 aa)) folds into the PDZ 10 domain. The disordered stretch occupies residues 1805–1828 (YHLGSPTAEHHPEDTEEPLQMTAG).

In terms of assembly, forms a ternary complex with PALS1 and CRB1. Component of a complex whose core is composed of ARHGAP17, AMOT, PALS1, INADL/PATJ and PARD3/PAR3. Forms a heterotrimeric complex composed of MMP5, LIN7B and PATJ; the N-terminal L27 domain of PALS1 interacts with the L27 domain of PATJ and the C-terminal L27 domain of PALS1 interacts with the L27 domain of LIN7B. Component of a complex composed of CRB3, PALS1 and PATJ. As part of the Crumbs complex; interacts with WWP1, the interaction is enhanced by AMOTL2 and facilitates WWP1 localization to the plasma membrane. The Crumbs complex promotes monoubiquitination of AMOTL2 by WWP1, which activates the Hippo signaling pathway. Interacts (via N-terminus) with PALS1/PALS (via PDZ domain). Interacts with TJP3/ZO-3 and CLDN1/claudin-1. Interacts with ASIC3, KCNJ10, KCNJ15, GRIN2A, GRIN2B, GRIN2C, GRIN2D, NLGN2, and HTR2A. Interacts with MPP7. Directly interacts with HTR4. Interacts (via PDZ domain 8) with WWC1 (via the ADDV motif). Interacts with SLC6A4. Interacts (via C-terminus) with ARHGEF18. Interacts with NPHP1. Interacts with PARD3/PAR3. Interacts (via PDZ1-6 domains) with TJP1/ZO1; the interaction is required for attachment and extension of TJP1/ZO1 condensates along the apical cell interface.

The protein localises to the cell junction. Its subcellular location is the tight junction. The protein resides in the apical cell membrane. It is found in the cytoplasm. It localises to the perinuclear region. Scaffolding protein that facilitates the localization of proteins to the cell membrane. Required for the correct formation of tight junctions and epithelial apico-basal polarity. Acts (via its L27 domain) as an apical connector and elongation factor for multistranded TJP1/ZO1 condensates that form a tight junction belt, thereby required for the formation of the tight junction-mediated cell barrier. Positively regulates epithelial cell microtubule elongation and cell migration, possibly via facilitating localization of PRKCI/aPKC and PAR3D/PAR3 at the leading edge of migrating cells. Plays a role in the correct reorientation of the microtubule-organizing center during epithelial migration. May regulate the surface expression and/or function of ASIC3 in sensory neurons. May recruit ARHGEF18 to apical cell-cell boundaries. The protein is InaD-like protein of Canis lupus familiaris (Dog).